Here is a 175-residue protein sequence, read N- to C-terminus: DELTA-stichotoxin-She4b (175 aa).

Residues A1–A10 are plays an important role in the hemolytic activity. The segment at G9–S28 is N-terminal region. Phosphocholine is bound by residues S52, V85, S103, P105, Y131, Y135, and Y136. The interval S103–K118 is trp-rich region, which is important for the binding to lipid membrane. Residues R141–D143 carry the Cell attachment site, crucial for protein stability motif.

Octamer or nonamer in membranes. Monomer in the soluble state. Originally described as forming tetramer in the presence of a lipidic interface. In terms of tissue distribution, expressed in tentacles and mesenteric filaments.

It is found in the secreted. The protein resides in the nematocyst. Its subcellular location is the target cell membrane. In terms of biological role, pore-forming protein that forms cations-selective hydrophilic pores of around 1 nm and causes cardiac stimulation and cytolysis. Pore formation is a multi-step process that involves specific recognition of membrane sphingomyelin (but neither cholesterol nor phosphatidylcholine) using aromatic rich region and adjacent phosphocholine (POC) binding site, firm binding to the membrane (mainly driven by hydrophobic interactions) accompanied by the transfer of the N-terminal region to the lipid-water interface and finally pore formation after oligomerization of monomers. Cytolytic effects include red blood cells hemolysis, platelet aggregation and lysis, cytotoxic and cytostatic effects on fibroblasts. Lethality in mammals has been ascribed to severe vasospasm of coronary vessels, cardiac arrhythmia, and inotropic effects. In Stichodactyla helianthus (Sun anemone), this protein is DELTA-stichotoxin-She4b.